The chain runs to 496 residues: E3 ubiquitin-protein ligase CBL-C (496 aa).

The segment at 7 to 144 (PRGWQRGEPR…SALFPAGKYC (138 aa)) is 4H. The region spanning 7–320 (PRGWQRGEPR…GKKHNPDLTE (314 aa)) is the Cbl-PTB domain. The segment at 145–217 (GHLYQLTKGS…FEFDVFTRLF (73 aa)) is EF-hand-like. Positions 198, 200, 202, and 209 each coordinate Ca(2+). The SH2-like stretch occupies residues 218–320 (QPWPTLLRNW…GKKHNPDLTE (103 aa)). Arginine 263 serves as a coordination point for 4-O-phospho-L-tyrosine. Residues 321 to 349 (LCRVEPYQRIQVSEEQLLLYQAMNSTFQL) are linker. Residue tyrosine 340 is modified to Phosphotyrosine; by SRC. The RING-type zinc-finger motif lies at 350–389 (CKICAERDKDVRIEPCGHLLCSCCLAAWQDSDSQTCPFCR). The interaction with RET stretch occupies residues 350-494 (CKICAERDKD…RPRAREEATE (145 aa)). The segment at 432 to 453 (PVIPSAPSLLPEDQFPQGPQDK) is disordered.

In terms of assembly, interacts with Ubiquitin-conjugating enzyme E2 UBE2D2 and UBE2D3. Isoform 1 interacts with EGFR (tyrosine phosphorylated). Interacts with the SH3 domain proteins LYN and CRK. Interacts (via RING-type zinc finger) with TGFB1I1 (via LIM zinc-binding domain 2); the interaction is direct and enhances the E3 activity. Interacts directly with RET (inactive) and CD2AP; dissociates from RET upon RET activation by GDNF which also increases the interaction with CD2AP suggesting dissociation as CBLC:CD2AP complex. Interacts with SRC; the interaction is enhanced when SRC is phosphorylated at 'Tyr-419'. Post-translationally, phosphorylated on tyrosines by EGFR. In terms of processing, phosphorylated on multiple tyrosine residues by SRC. Isoform 1, but not isoform 2, is phosphorylated on tyrosines by EGFR. Autoubiquitinated, when phosphorylated at Tyr-340. In terms of tissue distribution, widely expressed in tissues, where the expression is restricted to epithelial cells (at protein level).

It carries out the reaction S-ubiquitinyl-[E2 ubiquitin-conjugating enzyme]-L-cysteine + [acceptor protein]-L-lysine = [E2 ubiquitin-conjugating enzyme]-L-cysteine + N(6)-ubiquitinyl-[acceptor protein]-L-lysine.. Its activity is regulated as follows. Phosphorylation at Tyr-340 is necessary and sufficient for the activation of E3 activity. Functionally, acts as an E3 ubiquitin-protein ligase, which accepts ubiquitin from specific E2 ubiquitin-conjugating enzymes, and then transfers it to substrates promoting their degradation by the proteasome. Functionally coupled with the E2 ubiquitin-protein ligases UB2D1, UB2D2 and UB2D3. Regulator of EGFR mediated signal transduction; upon EGF activation, ubiquitinates EGFR. Isoform 1, but not isoform 2, inhibits EGF stimulated MAPK1 activation. Promotes ubiquitination of SRC phosphorylated at 'Tyr-424', has the highest ubiquitin ligase activity among CBL family proteins. In collaboration with CD2AP may act as regulatory checkpoint for Ret signaling by modulating the rate of RET degradation after ligand activation; CD2AP converts it from an inhibitor to a promoter of RET degradation; the function limits the potency of GDNF on neuronal survival. The sequence is that of E3 ubiquitin-protein ligase CBL-C (Cblc) from Mus musculus (Mouse).